Here is a 388-residue protein sequence, read N- to C-terminus: Protein YnjB (388 aa).

The segment at 333–357 (AVWGDPSVLDPQKLPDGQRESLQSR) is disordered.

This is Protein YnjB (ynjB) from Escherichia coli (strain K12).